Here is a 325-residue protein sequence, read N- to C-terminus: UDP-N-acetylglucosamine transporter (325 aa).

The next 8 membrane-spanning stretches (helical) occupy residues 8 to 24 (VSLG…VLTM), 42 to 58 (AVVV…ILLV), 138 to 154 (VYQW…VAFV), 173 to 189 (FVGL…SGFA), 209 to 225 (IQLG…GVYI), 246 to 262 (IVVV…AAVI), 268 to 284 (ILKG…STLI), and 295 to 311 (TSVF…ATFL).

The protein belongs to the nucleotide-sugar transporter family. SLC35A subfamily. In terms of assembly, interacts with SLC35A2; the interaction is reduced in the presence of SLC35A4. Found in a complex with SLC35A2 and SLC35A4. Interacts with MGAT4B. O-Glcnacylation regulates the stability of SLC35A3 and the specific complex formation with MGAT4B.

It localises to the golgi apparatus membrane. The enzyme catalyses UMP(out) + UDP-N-acetyl-alpha-D-glucosamine(in) = UMP(in) + UDP-N-acetyl-alpha-D-glucosamine(out). Functionally, transports diphosphate-N-acetylglucosamine (UDP-GlcNAc) from the cytosol into the lumen of the Golgi apparatus, functioning as an antiporter that exchanges UDP-N-acetyl-alpha-D-glucosamine for UMP. May supply UDP-GlcNAc as substrate for Golgi-resident glycosyltransferases that generate highly branched, multiantennary complex N-glycans and keratan sulfate. However, the exact role of SLC35A3 still needs to be elucidated, it could be a member of a catalytically more efficient multiprotein complex rather than function independently as a single transporter. The chain is UDP-N-acetylglucosamine transporter (SLC35A3) from Homo sapiens (Human).